Consider the following 129-residue polypeptide: UPF0225 protein XC_4246 (129 aa).

This sequence belongs to the UPF0225 family.

The sequence is that of UPF0225 protein XC_4246 from Xanthomonas campestris pv. campestris (strain 8004).